The primary structure comprises 468 residues: N-acyl-phosphatidylethanolamine-hydrolyzing phospholipase D, mitochondrial (468 aa).

A mitochondrion-targeting transit peptide spans 1–39 (MNFVTCHVQMRLLLQRRLVRLRESELFRPQTSLSTFKRH). Residues 54 to 76 (YARILLLSVLVPYTGYAFYVSLA) form a helical membrane-spanning segment. Residues H265, H267, D269, H270, H332, and H425 each contribute to the Zn(2+) site.

This sequence belongs to the NAPE-PLD family. The cofactor is Zn(2+).

Its subcellular location is the mitochondrion membrane. It carries out the reaction an N-acyl-1,2-diacyl-sn-glycero-3-phosphoethanolamine + H2O = an N-acylethanolamine + a 1,2-diacyl-sn-glycero-3-phosphate + H(+). Its function is as follows. Hydrolyzes N-acyl-phosphatidylethanolamines (NAPEs) to produce N-acylethanolamines (NAEs). This chain is N-acyl-phosphatidylethanolamine-hydrolyzing phospholipase D, mitochondrial (FMP30), found in Saccharomyces cerevisiae (strain ATCC 204508 / S288c) (Baker's yeast).